The primary structure comprises 82 residues: DNA-directed RNA polymerase subunit Rpo5 (82 aa).

This sequence belongs to the archaeal Rpo5/eukaryotic RPB5 RNA polymerase subunit family. In terms of assembly, part of the RNA polymerase complex.

Its subcellular location is the cytoplasm. The enzyme catalyses RNA(n) + a ribonucleoside 5'-triphosphate = RNA(n+1) + diphosphate. DNA-dependent RNA polymerase (RNAP) catalyzes the transcription of DNA into RNA using the four ribonucleoside triphosphates as substrates. This is DNA-directed RNA polymerase subunit Rpo5 from Thermococcus celer.